The chain runs to 605 residues: F-box/WD repeat-containing protein 1A (605 aa).

Residues 128-177 (ASYEKEKELCVKYFEQWSESDQVEFVEHLISQMCHYQHGHINSYLKPMLQ) are homodimerization domain D. In terms of domain architecture, F-box spans 190–228 (DHIAENILSYLDAKSLCAAELVCKEWYRVTSDGMLWKKL). The tract at residues 190 to 228 (DHIAENILSYLDAKSLCAAELVCKEWYRVTSDGMLWKKL) is required for down-regulation of SNAI1. WD repeat units lie at residues 301–338 (ETSK…CKRI), 341–378 (GHTG…MLNT), 381–418 (HHCE…DITL), 424–461 (GHRA…FVRT), 464–503 (GHKR…RVLE), 505–541 (HEEL…DPRA), and 553–590 (EHSG…AAQA).

As to quaternary structure, homodimer. Self-associates. Component of the SCF(BTRC) complex formed of CUL1, SKP1, RBX1 and a BTRC dimer. Direct interaction with SKP1 occurs via the F-box domain. Interacts with phosphorylated ubiquitination substrates SMAD3 and SMAD4. Interacts with phosphorylated ubiquitination substrates CTNNB1, NFKBIA, NFKBIB, NFKBIE, NFKB1/nuclear factor NF-kappa-B p105 subunit, ATF4, CDC25A, DLG1, FBXO5 and SNAI1; the interaction requires the phosphorylation of the 2 serine residues in the substrate destruction motif D-S-G-X(2,3,4)-S. Binds UBQLN1. Interacts with CDC34 and UBE2R2. Interacts with FBXW11. Interacts with CUL4A and DDB1. Part of a SCF(BTRC)-like complex lacking CUL1, which is associated with phosphorylated NKBIA and RELA; RELA interacts directly with NFKBIA. Interacts with the phosphorylated form of GLI3. Interacts with CLU. Interacts with PER1 (phosphorylated), PER2 (phosphorylated) and PER3. Interacts with phosphorylated ubiquitination substrate CEP68. Interacts with ZC3H12A; this interaction occurs when ZC3H12A is phosphorylated in a IKBKB/IKKB-dependent manner. Interacts with HSF1; this interaction occurs during mitosis and induces HSF1 ubiquitin-dependent degradation, a process inhibited by CDC20. Interacts with NFE2L1. Interacts with INAVA. Interacts with IL10RA; this interaction leads to IL10RA ubiquitination and subsequent degradation. Interacts with REST. Interacts with KLF4; this interaction leads to KLF4 ubiquitination and subsequent degradation. Interacts with UBR2, as part of a SCF(BTRC) complex; the interaction mediates 'Lys-48'-linked ubiquitination of UBR2 and is regulated by DUSP22 in the T-cell receptor signaling pathway. In terms of assembly, (Microbial infection) Interacts with vaccinia virus A49; this interaction inhibits NF-kappa-B activation. (Microbial infection) Interacts with HIV-1 Vpu. In terms of processing, ubiquitinated. Deubiquitinated by OTUD5, promoting its stability. Expressed in epididymis (at protein level).

Its subcellular location is the cytoplasm. The protein resides in the nucleus. Its pathway is protein modification; protein ubiquitination. Functionally, substrate recognition component of a SCF (SKP1-CUL1-F-box protein) E3 ubiquitin-protein ligase complex which mediates the ubiquitination and subsequent proteasomal degradation of target proteins. Recognizes and binds to phosphorylated target proteins. SCF(BTRC) mediates the ubiquitination of CTNNB1 and participates in Wnt signaling. SCF(BTRC) mediates the ubiquitination of phosphorylated NFKB1, ATF4, CDC25A, DLG1, FBXO5, PER1, SMAD3, SMAD4, SNAI1 and probably NFKB2. SCF(BTRC) mediates the ubiquitination of NFKBIA, NFKBIB and NFKBIE; the degradation frees the associated NFKB1 to translocate into the nucleus and to activate transcription. Ubiquitination of NFKBIA occurs at 'Lys-21' and 'Lys-22'. The SCF(FBXW11) complex also regulates NF-kappa-B by mediating ubiquitination of phosphorylated NFKB1: specifically ubiquitinates the p105 form of NFKB1, leading to its degradation. SCF(BTRC) mediates the ubiquitination of CEP68; this is required for centriole separation during mitosis. SCF(BTRC) mediates the ubiquitination and subsequent degradation of nuclear NFE2L1. Has an essential role in the control of the clock-dependent transcription via degradation of phosphorylated PER1 and PER2. May be involved in ubiquitination and subsequent proteasomal degradation through a DBB1-CUL4 E3 ubiquitin-protein ligase. Required for activation of NFKB-mediated transcription by IL1B, MAP3K14, MAP3K1, IKBKB and TNF. Required for proteolytic processing of GLI3. Mediates ubiquitination of REST, thereby leading to its proteasomal degradation. SCF(BTRC) mediates the ubiquitination and subsequent proteasomal degradation of KLF4; thereby negatively regulating cell pluripotency maintenance and embryogenesis. SCF(BTRC) acts as a regulator of mTORC1 signaling pathway by catalyzing ubiquitination and subsequent proteasomal degradation of phosphorylated DEPTOR, TFE3 and MITF. SCF(BTRC) directs 'Lys-48'-linked ubiquitination of UBR2 in the T-cell receptor signaling pathway. The polypeptide is F-box/WD repeat-containing protein 1A (BTRC) (Homo sapiens (Human)).